The following is a 210-amino-acid chain: Calcineurin B-like protein 4 (210 aa).

The N-myristoyl glycine moiety is linked to residue Gly2. EF-hand domains lie at Glu31–Arg66, Lys67–Lys102, Pro104–Glu139, and Ala148–Ser183. 5 residues coordinate Ca(2+): Asp161, Asn163, Asp165, Arg167, and Glu172.

It belongs to the calcineurin regulatory subunit family. In terms of assembly, homodimer. Interacts with CIPK24. In terms of tissue distribution, expressed in leaves.

The protein localises to the cell membrane. Functionally, acts as a calcium sensor involved in the regulatory pathway for the control of intracellular Na(+) and K(+) homeostasis and salt tolerance. Operates in synergy with CIPK24 to activate the plasma membrane Na(+)/H(+) antiporter SOS1. May function as positive regulator of salt stress responses. CBL proteins interact with CIPK serine-threonine protein kinases. Binding of a CBL protein to the regulatory NAF domain of a CIPK protein lead to the activation of the kinase in a calcium-dependent manner. In Oryza sativa subsp. japonica (Rice), this protein is Calcineurin B-like protein 4 (CBL4).